The following is a 278-amino-acid chain: MASGKHHQPGGTRSLTMQKVSLRVTPRLVLEVNRHNAICVATNVPEFYNARGDLNIRDLRAHVKARMISSQFCGYVLVSLLDSEDQVDHLNIFPHVFSERMILYKPNNVNLMEMCALLSMIENAKSPSIGLCREVLGRLTLLHSKCNNLDSLFLYNGARTLLSTLVKYHDLEEGAATPGPWNEGLSLFKLHKELKRAPSEARDLMQSLFLTSGKMGCLARSPKDYCADLNKEEDANSGFTFNLFYQDSLLTKHFQCQTVLQTLRRKCLGSDTVSKIIP.

Belongs to the herpesviridae cytoplasmic envelopment protein 1 family. As to quaternary structure, interacts with BSRF1 tegument protein; the BBRF2-BSRF1 complexes oligomerize and might play a role in tethering the viral nucleocapsids to the host Golgi membrane during secondary envelopment.

Its subcellular location is the virion. The protein resides in the virion tegument. The protein localises to the host cytoplasm. It is found in the host Golgi apparatus. Its function is as follows. Plays a critical role in cytoplasmic virus egress. Participates in the final step of tegumentation and envelope acquisition within the host cytoplasm. This Homo sapiens (Human) protein is Cytoplasmic envelopment protein 1.